A 392-amino-acid chain; its full sequence is Homoserine O-acetyltransferase (392 aa).

Positions Asn-52–Glu-356 constitute an AB hydrolase-1 domain. Ser-157 serves as the catalytic Nucleophile. Position 227 (Arg-227) interacts with substrate. Residues Asp-320 and His-350 contribute to the active site. Asp-351 serves as a coordination point for substrate. The disordered stretch occupies residues Ser-373–Arg-392.

It belongs to the AB hydrolase superfamily. MetX family. As to quaternary structure, homodimer.

The protein localises to the cytoplasm. The enzyme catalyses L-homoserine + acetyl-CoA = O-acetyl-L-homoserine + CoA. Its pathway is amino-acid biosynthesis; L-methionine biosynthesis via de novo pathway; O-acetyl-L-homoserine from L-homoserine: step 1/1. Its function is as follows. Transfers an acetyl group from acetyl-CoA to L-homoserine, forming acetyl-L-homoserine. The chain is Homoserine O-acetyltransferase from Mycobacterium avium (strain 104).